The following is a 172-amino-acid chain: Centrin-1 (172 aa).

Residues 1–30 (MASSYRKPTVASTSQKRKVGPKPELTEEQK) are disordered. EF-hand domains lie at 28-63 (EQKQ…LGFE), 64-99 (PRKE…KMAE), 101-136 (DTKE…LGEN), and 137-172 (LTDE…TNLY). Ca(2+) is bound by residues aspartate 41, aspartate 43, serine 45, threonine 47, and glutamate 52. Ca(2+) contacts are provided by aspartate 150, aspartate 152, aspartate 154, glutamate 156, and glutamate 161.

It belongs to the centrin family. In terms of assembly, monomer. Interacts with CIMAP3. Interacts with USP49.

The protein localises to the cytoplasm. It localises to the cytoskeleton. It is found in the microtubule organizing center. Its subcellular location is the centrosome. Functionally, plays a fundamental role in microtubule-organizing center structure and function. Plays a role in sperm cilia formation. This chain is Centrin-1 (CETN1), found in Bos taurus (Bovine).